We begin with the raw amino-acid sequence, 315 residues long: Methionyl-tRNA formyltransferase (315 aa).

113–116 contacts (6S)-5,6,7,8-tetrahydrofolate; the sequence is SLLP.

This sequence belongs to the Fmt family.

It carries out the reaction L-methionyl-tRNA(fMet) + (6R)-10-formyltetrahydrofolate = N-formyl-L-methionyl-tRNA(fMet) + (6S)-5,6,7,8-tetrahydrofolate + H(+). Attaches a formyl group to the free amino group of methionyl-tRNA(fMet). The formyl group appears to play a dual role in the initiator identity of N-formylmethionyl-tRNA by promoting its recognition by IF2 and preventing the misappropriation of this tRNA by the elongation apparatus. This is Methionyl-tRNA formyltransferase from Escherichia coli (strain SE11).